Consider the following 96-residue polypeptide: UPF0235 protein CKO_04329 (96 aa).

This sequence belongs to the UPF0235 family.

The sequence is that of UPF0235 protein CKO_04329 from Citrobacter koseri (strain ATCC BAA-895 / CDC 4225-83 / SGSC4696).